Here is a 326-residue protein sequence, read N- to C-terminus: Porphobilinogen deaminase (326 aa).

Residue cysteine 251 is modified to S-(dipyrrolylmethanemethyl)cysteine.

The protein belongs to the HMBS family. Requires dipyrromethane as cofactor.

It carries out the reaction 4 porphobilinogen + H2O = hydroxymethylbilane + 4 NH4(+). The protein operates within porphyrin-containing compound metabolism; protoporphyrin-IX biosynthesis; coproporphyrinogen-III from 5-aminolevulinate: step 2/4. Functionally, tetrapolymerization of the monopyrrole PBG into the hydroxymethylbilane pre-uroporphyrinogen in several discrete steps. The polypeptide is Porphobilinogen deaminase (HEM3) (Eremothecium gossypii (strain ATCC 10895 / CBS 109.51 / FGSC 9923 / NRRL Y-1056) (Yeast)).